The primary structure comprises 601 residues: Elongation factor 4 (601 aa).

In terms of domain architecture, tr-type G spans 5–187 (DKIRNFSIIA…SIVKDLPAPQ (183 aa)). Residues 17–22 (DHGKST) and 134–137 (NKVD) contribute to the GTP site.

Belongs to the TRAFAC class translation factor GTPase superfamily. Classic translation factor GTPase family. LepA subfamily.

Its subcellular location is the cell inner membrane. It catalyses the reaction GTP + H2O = GDP + phosphate + H(+). Functionally, required for accurate and efficient protein synthesis under certain stress conditions. May act as a fidelity factor of the translation reaction, by catalyzing a one-codon backward translocation of tRNAs on improperly translocated ribosomes. Back-translocation proceeds from a post-translocation (POST) complex to a pre-translocation (PRE) complex, thus giving elongation factor G a second chance to translocate the tRNAs correctly. Binds to ribosomes in a GTP-dependent manner. This Maridesulfovibrio salexigens (strain ATCC 14822 / DSM 2638 / NCIMB 8403 / VKM B-1763) (Desulfovibrio salexigens) protein is Elongation factor 4.